Consider the following 282-residue polypeptide: D-alanine aminotransferase (282 aa).

Tyrosine 32 is a substrate binding site. Arginine 51 is a binding site for pyridoxal 5'-phosphate. Substrate contacts are provided by arginine 99 and histidine 101. Lysine 146 serves as the catalytic Proton acceptor. Lysine 146 carries the post-translational modification N6-(pyridoxal phosphate)lysine. Glutamate 178 serves as a coordination point for pyridoxal 5'-phosphate.

Belongs to the class-IV pyridoxal-phosphate-dependent aminotransferase family. As to quaternary structure, homodimer. It depends on pyridoxal 5'-phosphate as a cofactor.

The catalysed reaction is D-alanine + 2-oxoglutarate = D-glutamate + pyruvate. Its function is as follows. Acts on the D-isomers of alanine, leucine, aspartate, glutamate, aminobutyrate, norvaline and asparagine. The enzyme transfers an amino group from a substrate D-amino acid to the pyridoxal phosphate cofactor to form pyridoxamine and an alpha-keto acid in the first half-reaction. The second half-reaction is the reverse of the first, transferring the amino group from the pyridoxamine to a second alpha-keto acid to form the product D-amino acid via a ping-pong mechanism. This is an important process in the formation of D-alanine and D-glutamate, which are essential bacterial cell wall components. The polypeptide is D-alanine aminotransferase (dat) (Staphylococcus aureus (strain MSSA476)).